Consider the following 89-residue polypeptide: Small ribosomal subunit protein uS17 (89 aa).

Belongs to the universal ribosomal protein uS17 family. As to quaternary structure, part of the 30S ribosomal subunit.

Its function is as follows. One of the primary rRNA binding proteins, it binds specifically to the 5'-end of 16S ribosomal RNA. The sequence is that of Small ribosomal subunit protein uS17 from Coxiella burnetii (strain Dugway 5J108-111).